We begin with the raw amino-acid sequence, 185 residues long: Ribosome-recycling factor (185 aa).

It belongs to the RRF family.

Its subcellular location is the cytoplasm. Responsible for the release of ribosomes from messenger RNA at the termination of protein biosynthesis. May increase the efficiency of translation by recycling ribosomes from one round of translation to another. In Carboxydothermus hydrogenoformans (strain ATCC BAA-161 / DSM 6008 / Z-2901), this protein is Ribosome-recycling factor.